The primary structure comprises 1403 residues: DNA-directed RNA polymerase subunit beta' (1403 aa).

Zn(2+) is bound by residues Cys71, Cys73, Cys86, and Cys89. Positions 462, 464, and 466 each coordinate Mg(2+). Zn(2+) is bound by residues Cys811, Cys885, Cys892, and Cys895.

It belongs to the RNA polymerase beta' chain family. As to quaternary structure, the RNAP catalytic core consists of 2 alpha, 1 beta, 1 beta' and 1 omega subunit. When a sigma factor is associated with the core the holoenzyme is formed, which can initiate transcription. Mg(2+) serves as cofactor. Zn(2+) is required as a cofactor.

It catalyses the reaction RNA(n) + a ribonucleoside 5'-triphosphate = RNA(n+1) + diphosphate. Its function is as follows. DNA-dependent RNA polymerase catalyzes the transcription of DNA into RNA using the four ribonucleoside triphosphates as substrates. In Bartonella bacilliformis (strain ATCC 35685 / KC583 / Herrer 020/F12,63), this protein is DNA-directed RNA polymerase subunit beta'.